The following is a 229-amino-acid chain: Peptidyl-prolyl cis-trans isomerase FKBP17-1, chloroplastic (229 aa).

The transit peptide at 1–63 (MIRCFAWTPL…SISLSIIAVT (63 aa)) directs the protein to the chloroplast. The PPIase FKBP-type domain maps to 105-225 (GDQIEIHYYG…VFDIELVSTR (121 aa)).

It belongs to the FKBP-type PPIase family.

The protein localises to the plastid. It localises to the chloroplast thylakoid lumen. It catalyses the reaction [protein]-peptidylproline (omega=180) = [protein]-peptidylproline (omega=0). Functionally, PPIases accelerate the folding of proteins. It catalyzes the cis-trans isomerization of proline imidic peptide bonds in oligopeptides. This Arabidopsis thaliana (Mouse-ear cress) protein is Peptidyl-prolyl cis-trans isomerase FKBP17-1, chloroplastic (FKBP17-1).